The primary structure comprises 187 residues: CASP-like protein SELMODRAFT_416718 (187 aa).

A helical membrane pass occupies residues 1–21; sequence MMFGGVGMATLPLSLIFAFKN. The Extracellular segment spans residues 22-100; that stretch reads RPKCVITRAQ…EAFPQGEKAD (79 aa). A helical transmembrane segment spans residues 101–119; sequence TSWALTVLFYLAKLVFGIL. Topologically, residues 120–125 are cytoplasmic; it reads GLALSV. A helical transmembrane segment spans residues 126-145; the sequence is IWLLHIIVFMLVNPPAFPFL. The Extracellular portion of the chain corresponds to 146 to 155; the sequence is NQVFIQLDSA. A helical membrane pass occupies residues 156-176; the sequence is WGLLGTTAFAIFCYYLVMSVI. At 177–187 the chain is on the cytoplasmic side; sequence SGEMHSIYPMK.

Belongs to the Casparian strip membrane proteins (CASP) family. In terms of assembly, homodimer and heterodimers.

The protein resides in the cell membrane. The chain is CASP-like protein SELMODRAFT_416718 from Selaginella moellendorffii (Spikemoss).